Here is a 177-residue protein sequence, read N- to C-terminus: Large ribosomal subunit protein uL6 (177 aa).

This sequence belongs to the universal ribosomal protein uL6 family. In terms of assembly, part of the 50S ribosomal subunit.

Functionally, this protein binds to the 23S rRNA, and is important in its secondary structure. It is located near the subunit interface in the base of the L7/L12 stalk, and near the tRNA binding site of the peptidyltransferase center. In Salmonella newport (strain SL254), this protein is Large ribosomal subunit protein uL6.